A 244-amino-acid chain; its full sequence is Phosphoadenosine 5'-phosphosulfate reductase (244 aa).

Cysteine 239 (nucleophile; cysteine thiosulfonate intermediate) is an active-site residue.

The protein belongs to the PAPS reductase family. CysH subfamily.

It localises to the cytoplasm. It catalyses the reaction [thioredoxin]-disulfide + sulfite + adenosine 3',5'-bisphosphate + 2 H(+) = [thioredoxin]-dithiol + 3'-phosphoadenylyl sulfate. Its pathway is sulfur metabolism; hydrogen sulfide biosynthesis; sulfite from sulfate: step 3/3. Functionally, catalyzes the formation of sulfite from phosphoadenosine 5'-phosphosulfate (PAPS) using thioredoxin as an electron donor. This is Phosphoadenosine 5'-phosphosulfate reductase from Zymomonas mobilis subsp. mobilis (strain ATCC 31821 / ZM4 / CP4).